The primary structure comprises 411 residues: Methylthioribose-1-phosphate isomerase (411 aa).

Serine 2 bears the N-acetylserine mark. The active-site Proton donor is aspartate 280. Serine 351 bears the Phosphoserine mark.

This sequence belongs to the eIF-2B alpha/beta/delta subunits family. MtnA subfamily. In terms of assembly, homodimer.

It localises to the cytoplasm. The protein resides in the nucleus. The enzyme catalyses 5-(methylsulfanyl)-alpha-D-ribose 1-phosphate = 5-(methylsulfanyl)-D-ribulose 1-phosphate. It functions in the pathway amino-acid biosynthesis; L-methionine biosynthesis via salvage pathway; L-methionine from S-methyl-5-thio-alpha-D-ribose 1-phosphate: step 1/6. Its function is as follows. Catalyzes the interconversion of methylthioribose-1-phosphate (MTR-1-P) into methylthioribulose-1-phosphate (MTRu-1-P). This chain is Methylthioribose-1-phosphate isomerase, found in Saccharomyces cerevisiae (strain RM11-1a) (Baker's yeast).